The primary structure comprises 474 residues: tRNA-2-methylthio-N(6)-dimethylallyladenosine synthase (474 aa).

Residues 3–120 form the MTTase N-terminal domain; it reads KKLHIKTWGC…LPEMINSVRG (118 aa). 6 residues coordinate [4Fe-4S] cluster: C12, C49, C83, C157, C161, and C164. The 233-residue stretch at 143–375 folds into the Radical SAM core domain; that stretch reads RAEGPTAFVS…QERINQQAMA (233 aa). The TRAM domain maps to 378 to 441; the sequence is RRMLGTTQRI…PNSLRGKVVR (64 aa).

It belongs to the methylthiotransferase family. MiaB subfamily. In terms of assembly, monomer. [4Fe-4S] cluster is required as a cofactor.

It is found in the cytoplasm. It carries out the reaction N(6)-dimethylallyladenosine(37) in tRNA + (sulfur carrier)-SH + AH2 + 2 S-adenosyl-L-methionine = 2-methylsulfanyl-N(6)-dimethylallyladenosine(37) in tRNA + (sulfur carrier)-H + 5'-deoxyadenosine + L-methionine + A + S-adenosyl-L-homocysteine + 2 H(+). Its function is as follows. Catalyzes the methylthiolation of N6-(dimethylallyl)adenosine (i(6)A), leading to the formation of 2-methylthio-N6-(dimethylallyl)adenosine (ms(2)i(6)A) at position 37 in tRNAs that read codons beginning with uridine. This chain is tRNA-2-methylthio-N(6)-dimethylallyladenosine synthase, found in Escherichia coli (strain SE11).